Consider the following 204-residue polypeptide: Octanoyltransferase (204 aa).

Positions 27-204 (KNTKDELWIV…LINYVSRNRH (178 aa)) constitute a BPL/LPL catalytic domain. Substrate is bound by residues 66-73 (RGGQVTYH), 133-135 (ALG), and 146-148 (GLS). The Acyl-thioester intermediate role is filled by cysteine 164.

Belongs to the LipB family.

It localises to the cytoplasm. It catalyses the reaction octanoyl-[ACP] + L-lysyl-[protein] = N(6)-octanoyl-L-lysyl-[protein] + holo-[ACP] + H(+). Its pathway is protein modification; protein lipoylation via endogenous pathway; protein N(6)-(lipoyl)lysine from octanoyl-[acyl-carrier-protein]: step 1/2. In terms of biological role, catalyzes the transfer of endogenously produced octanoic acid from octanoyl-acyl-carrier-protein onto the lipoyl domains of lipoate-dependent enzymes. Lipoyl-ACP can also act as a substrate although octanoyl-ACP is likely to be the physiological substrate. In Vesicomyosocius okutanii subsp. Calyptogena okutanii (strain HA), this protein is Octanoyltransferase.